Reading from the N-terminus, the 313-residue chain is Protein FixB (313 aa).

255-283 (LYLAVGISGQIQHMVGANASQTIFAINKD) is a binding site for FAD.

This sequence belongs to the ETF alpha-subunit/FixB family. Heterodimer of FixA and FixB.

It participates in amine and polyamine metabolism; carnitine metabolism. Functionally, required for anaerobic carnitine reduction. May bring reductant to CaiA. The polypeptide is Protein FixB (Escherichia coli O17:K52:H18 (strain UMN026 / ExPEC)).